Consider the following 206-residue polypeptide: Emopamil-binding protein-like (206 aa).

The next 4 membrane-spanning stretches (helical) occupy residues 10–30 (EAGG…ALGL), 42–62 (GALI…GPFV), 101–121 (VEIL…YAIV), and 165–185 (CWLY…LLLW). One can recognise an EXPERA domain in the interval 39–184 (ADRGALIWLC…VWVLIPGLLL (146 aa)).

Belongs to the EBP family. As to quaternary structure, homodimer. In terms of tissue distribution, widely expressed with highest levels in liver, lung and kidney.

Its subcellular location is the endoplasmic reticulum membrane. Its function is as follows. Does not possess sterol isomerase activity and does not bind sigma ligands. This chain is Emopamil-binding protein-like (EBPL), found in Homo sapiens (Human).